The sequence spans 498 residues: ATP synthase subunit beta, chloroplastic (498 aa).

Residue Thr-6 is modified to Phosphothreonine. Phosphoserine is present on Ser-13. 172-179 provides a ligand contact to ATP; the sequence is GGAGVGKT.

Belongs to the ATPase alpha/beta chains family. F-type ATPases have 2 components, CF(1) - the catalytic core - and CF(0) - the membrane proton channel. CF(1) has five subunits: alpha(3), beta(3), gamma(1), delta(1), epsilon(1). CF(0) has four main subunits: a(1), b(1), b'(1) and c(9-12).

The protein localises to the plastid. It localises to the chloroplast thylakoid membrane. It carries out the reaction ATP + H2O + 4 H(+)(in) = ADP + phosphate + 5 H(+)(out). Its function is as follows. Produces ATP from ADP in the presence of a proton gradient across the membrane. The catalytic sites are hosted primarily by the beta subunits. This Capsella bursa-pastoris (Shepherd's purse) protein is ATP synthase subunit beta, chloroplastic.